Here is a 1898-residue protein sequence, read N- to C-terminus: Protein NYNRIN (1898 aa).

Disordered stretches follow at residues 289-315 (SNNQDGMDSAQEEGTVQATSSQDSTNH), 424-450 (LPSAESPAGRPDGGLGGEAALQNCPRP), 467-533 (DVKD…TDQS), 618-691 (EPTT…TDAG), and 711-731 (VSLLKGQGQAGRQGPQSSGTL). Residues 618–627 (EPTTPKTPQA) are compositionally biased toward polar residues. Over residues 649-672 (PAATVSKAPAASKAPAAPKVPVTP) the composition is skewed to low complexity. Residues 792–942 (LRRVVIDGSS…LGRDGPTLDE (151 aa)) enclose the RNase NYN domain. The segment at 968-1019 (SASVTELSDDADSGPLESLPNMEEVREEKEERQDEEQRQGQGTQKAAEEDDL) is disordered. Positions 990–1005 (EEVREEKEERQDEEQR) are enriched in basic and acidic residues. The 147-residue stretch at 1304-1450 (LSTFVCIHMS…VDTLAKQGAQ (147 aa)) folds into the RNase H type-1 domain. Helical transmembrane passes span 1372-1392 (VVFLTHCNWIFSLLWELLPLW) and 1408-1428 (PSLLSYIISLTSGLSSLPFIY). Residues 1609–1774 (RSTAPWSNLQ…ESRLTEPLWW (166 aa)) form the Integrase catalytic domain.

The protein localises to the membrane. The chain is Protein NYNRIN (NYNRIN) from Homo sapiens (Human).